Consider the following 167-residue polypeptide: Interferon gamma (167 aa).

The first 23 residues, 1-23, serve as a signal peptide directing secretion; it reads MNYTGYLLAFQLCIILGSSSCYC. Position 24 is a pyrrolidone carboxylic acid (Gln24). Asn39 and Asn105 each carry an N-linked (GlcNAc...) asparagine glycan. The interval 148–167 is disordered; sequence SNLRKRKRSQSTFHGRRASI. A compositionally biased stretch (basic residues) spans 149 to 167; that stretch reads NLRKRKRSQSTFHGRRASI.

It belongs to the type II (or gamma) interferon family. As to quaternary structure, homodimer. Interacts with IFNGR1 (via extracellular domain); this interaction promotes IFNGR1 dimerization. Released primarily from activated T lymphocytes.

The protein localises to the secreted. Its function is as follows. Type II interferon produced by immune cells such as T-cells and NK cells that plays crucial roles in antimicrobial, antiviral, and antitumor responses by activating effector immune cells and enhancing antigen presentation. Primarily signals through the JAK-STAT pathway after interaction with its receptor IFNGR1 to affect gene regulation. Upon IFNG binding, IFNGR1 intracellular domain opens out to allow association of downstream signaling components JAK2, JAK1 and STAT1, leading to STAT1 activation, nuclear translocation and transcription of IFNG-regulated genes. Many of the induced genes are transcription factors such as IRF1 that are able to further drive regulation of a next wave of transcription. Plays a role in class I antigen presentation pathway by inducing a replacement of catalytic proteasome subunits with immunoproteasome subunits. In turn, increases the quantity, quality, and repertoire of peptides for class I MHC loading. Increases the efficiency of peptide generation also by inducing the expression of activator PA28 that associates with the proteasome and alters its proteolytic cleavage preference. Up-regulates as well MHC II complexes on the cell surface by promoting expression of several key molecules such as cathepsins B/CTSB, H/CTSH, and L/CTSL. Participates in the regulation of hematopoietic stem cells during development and under homeostatic conditions by affecting their development, quiescence, and differentiation. In Dasypus novemcinctus (Nine-banded armadillo), this protein is Interferon gamma (IFNG).